We begin with the raw amino-acid sequence, 639 residues long: DNA mismatch repair protein MutL (639 aa).

A disordered region spans residues 336–392 (SAHDDPTPAISGAARDEEPRGVENRASAGENRFNRPASSPVASAPRPAHVAAPRMPA). The span at 349–358 (ARDEEPRGVE) shows a compositional bias: basic and acidic residues. A compositionally biased stretch (low complexity) spans 370-392 (RPASSPVASAPRPAHVAAPRMPA).

Belongs to the DNA mismatch repair MutL/HexB family.

Functionally, this protein is involved in the repair of mismatches in DNA. It is required for dam-dependent methyl-directed DNA mismatch repair. May act as a 'molecular matchmaker', a protein that promotes the formation of a stable complex between two or more DNA-binding proteins in an ATP-dependent manner without itself being part of a final effector complex. The protein is DNA mismatch repair protein MutL of Edwardsiella ictaluri (strain 93-146).